Reading from the N-terminus, the 425-residue chain is Lipoyl synthase, mitochondrial (425 aa).

The transit peptide at 1-33 (MAASSTRLRCLYASSSTWKTSPSQSLISLSRRY) directs the protein to the mitochondrion. The segment at 17–55 (TWKTSPSQSLISLSRRYATTSSAPPTPSDESSSTLPKRR) is disordered. The span at 33-51 (YATTSSAPPTPSDESSSTL) shows a compositional bias: polar residues. Residues Cys142, Cys147, Cys153, Cys173, Cys177, Cys180, and Ser388 each contribute to the [4Fe-4S] cluster site. The 222-residue stretch at 156–377 (GSDKSAATAT…RQRALEMGFL (222 aa)) folds into the Radical SAM core domain.

The protein belongs to the radical SAM superfamily. Lipoyl synthase family. [4Fe-4S] cluster is required as a cofactor.

Its subcellular location is the mitochondrion. It catalyses the reaction [[Fe-S] cluster scaffold protein carrying a second [4Fe-4S](2+) cluster] + N(6)-octanoyl-L-lysyl-[protein] + 2 oxidized [2Fe-2S]-[ferredoxin] + 2 S-adenosyl-L-methionine + 4 H(+) = [[Fe-S] cluster scaffold protein] + N(6)-[(R)-dihydrolipoyl]-L-lysyl-[protein] + 4 Fe(3+) + 2 hydrogen sulfide + 2 5'-deoxyadenosine + 2 L-methionine + 2 reduced [2Fe-2S]-[ferredoxin]. It participates in protein modification; protein lipoylation via endogenous pathway; protein N(6)-(lipoyl)lysine from octanoyl-[acyl-carrier-protein]: step 2/2. Catalyzes the radical-mediated insertion of two sulfur atoms into the C-6 and C-8 positions of the octanoyl moiety bound to the lipoyl domains of lipoate-dependent enzymes, thereby converting the octanoylated domains into lipoylated derivatives. The polypeptide is Lipoyl synthase, mitochondrial (Talaromyces marneffei (strain ATCC 18224 / CBS 334.59 / QM 7333) (Penicillium marneffei)).